The chain runs to 374 residues: 2-oxoglutarate-Fe(II) type oxidoreductase ppzC (374 aa).

The interval 111–130 is disordered; the sequence is KDGPFDSGYRGPGTQRVNPT. Residues 220–330 form the Fe2OG dioxygenase domain; that stretch reads YPDASLEINF…RVSMPFFWGF (111 aa). Fe cation is bound by residues His254, Asp256, and His311. 2-oxoglutarate is bound at residue Arg321.

The protein belongs to the iron/ascorbate-dependent oxidoreductase family. Fe(2+) is required as a cofactor.

It catalyses the reaction peramine + 2-oxoglutarate + O2 = 8-hydroxyperamine + succinate + CO2. It participates in secondary metabolite biosynthesis. In terms of biological role, 2-oxoglutarate-Fe(II) type oxidoreductase; part of the gene cluster that mediates the biosynthesis of pyrrolopyrazines, secondary metabolites showing insecticidal activity. Within the pathway, ppzC uses peramine as substrate for hydroxylation to yield the novel analog 8-hydroxyperamine. The single multifunctional NRPS ppzA is sufficient to produce peramine via condensation of 1-pyrroline-5-carboxylate and arginine, N-methylation of the alpha-amino group of arginine and reduction of the thioester and the cyclization to form an iminium ion resulting in release from the peptide synthetase. Deprotonation of this intermediate and oxidation of the pyrroline ring would give rise to peramine. In Epichloe species that produce only peramine, the peramine synthetase gene is not localized in a gene cluster, in contrast to Metarhizium species that contain additional pyrrolopyrazine biosynthesis genes. The 2-oxoglutarate-Fe(II) type oxidoreductase ppzC hydroxylates peramine to yield the newly identified compound 8-hydroxyperamine whereas ppzD converts L-proline into trans-4-hydroxy-L-proline, a precursor of peramine biosynthesis. The polypeptide is 2-oxoglutarate-Fe(II) type oxidoreductase ppzC (Metarhizium rileyi (strain RCEF 4871) (Nomuraea rileyi)).